A 198-amino-acid chain; its full sequence is Transcription factor FapR (198 aa).

Residues 102 to 169 (NRIARGHHLF…RTIVEVNSYV (68 aa)) enclose the MaoC-like domain.

It belongs to the FapR family.

Its function is as follows. Transcriptional factor involved in regulation of membrane lipid biosynthesis by repressing genes involved in fatty acid and phospholipid metabolism. The protein is Transcription factor FapR of Geobacillus sp. (strain WCH70).